The sequence spans 389 residues: Ethanolamine-phosphate cytidylyltransferase (389 aa).

CTP-binding positions include 221-222 (AF), 229-232 (HVDF), K259, 307-310 (HGKT), and 336-340 (SGNDL). 2 positions are modified to phosphothreonine: T341 and T342.

Belongs to the cytidylyltransferase family.

It catalyses the reaction phosphoethanolamine + CTP + H(+) = CDP-ethanolamine + diphosphate. Its pathway is phospholipid metabolism; phosphatidylethanolamine biosynthesis; phosphatidylethanolamine from ethanolamine: step 2/3. In terms of biological role, ethanolamine-phosphate cytidylyltransferase that catalyzes the second step in the synthesis of phosphatidylethanolamine (PE) from ethanolamine via the CDP-ethanolamine pathway. Phosphatidylethanolamine is a dominant inner-leaflet phospholipid in cell membranes, where it plays a role in membrane function by structurally stabilizing membrane-anchored proteins, and participates in important cellular processes such as cell division, cell fusion, blood coagulation, and apoptosis. The sequence is that of Ethanolamine-phosphate cytidylyltransferase (PCYT2) from Bos taurus (Bovine).